The sequence spans 398 residues: O-methyltransferase aoiO (398 aa).

Residue Asp-251 coordinates S-adenosyl-L-methionine. His-299 functions as the Proton acceptor in the catalytic mechanism.

It belongs to the class I-like SAM-binding methyltransferase superfamily. Cation-independent O-methyltransferase family.

In terms of biological role, O-methyltransferase; part of the gene cluster that mediates the biosynthesis of a methylated derivative of known natural products orthosporin and diaporthin. Seems not to be involved in the biosynthesis of the identified final product of the pathway and its function has still to be determined. The polypeptide is O-methyltransferase aoiO (Aspergillus oryzae (strain ATCC 42149 / RIB 40) (Yellow koji mold)).